We begin with the raw amino-acid sequence, 263 residues long: MKNKNVIQKMREKIPLIHCITNYVTINDCANILLSFGASPAMCEAYDEVYDFVSISSALYINLGTLTKEQETAAVLASISAKNHNVPVVIDPVGCPAIKRKVEVINRIAEVGRIDIIKGNIGEIKFLAGMDSETRGVDSLDNGENALNACTQLAKKYNCIVAATGQKDFVSDGKRGSVIKNGTEMLTKVTGAGCMLGALCAATCANFEDKLVSTTAAILSMNIAGEKAYEKAQLPGSFRIALIDNIYMISDEEIWERGNVEWK.

Residue methionine 42 coordinates substrate. The ATP site is built by lysine 118 and threonine 164. Residue glycine 191 coordinates substrate.

The protein belongs to the Thz kinase family. The cofactor is Mg(2+).

The enzyme catalyses 5-(2-hydroxyethyl)-4-methylthiazole + ATP = 4-methyl-5-(2-phosphooxyethyl)-thiazole + ADP + H(+). It functions in the pathway cofactor biosynthesis; thiamine diphosphate biosynthesis; 4-methyl-5-(2-phosphoethyl)-thiazole from 5-(2-hydroxyethyl)-4-methylthiazole: step 1/1. Its function is as follows. Catalyzes the phosphorylation of the hydroxyl group of 4-methyl-5-beta-hydroxyethylthiazole (THZ). The protein is Hydroxyethylthiazole kinase 1 of Clostridium botulinum (strain Langeland / NCTC 10281 / Type F).